A 248-amino-acid chain; its full sequence is MALLEICCYSMECALTAQQNGADRVELCAAPKEGGLTPSLGVLKSVRQRVTIPVHPIIRPRGGDFCYSDGEFAAILEDVRTVRELGFPGLVTGVLDVDGNVDMPRMEKIMAAAGPLAVTFHRAFDMCANPLYTLNNLAELGIARVLTSGQKSDALQGLSKIMELIAHRDAPIIMAGAGVRAENLHHFLDAGVLEVHSSAGAWQASPMRYRNQGLSMSSDAHADEYSRYIVDGAAVAEMKGIIERHQAK.

This sequence belongs to the CutC family. As to quaternary structure, homodimer.

The protein localises to the cytoplasm. The polypeptide is PF03932 family protein CutC (Escherichia coli (strain 55989 / EAEC)).